Consider the following 122-residue polypeptide: Large ribosomal subunit protein uL14c (122 aa).

Belongs to the universal ribosomal protein uL14 family. In terms of assembly, part of the 50S ribosomal subunit.

It is found in the plastid. Its subcellular location is the chloroplast. Its function is as follows. Binds to 23S rRNA. The protein is Large ribosomal subunit protein uL14c of Marchantia polymorpha (Common liverwort).